The primary structure comprises 257 residues: Distal membrane-arm assembly complex protein 2 (257 aa).

At Ser253 the chain carries Phosphoserine.

It belongs to the ATP synthase subunit s family. In terms of assembly, interacts with incompletely assembled mitochondrial NADH:ubiquinone oxidoreductase complex (complex I).

The protein resides in the mitochondrion. In terms of biological role, required for the assembly of the mitochondrial NADH:ubiquinone oxidoreductase complex (complex I). Involved in the assembly of the distal region of complex I. This chain is Distal membrane-arm assembly complex protein 2, found in Homo sapiens (Human).